The chain runs to 836 residues: MLLSTWTPGCFQGNKILLRSLITWYYLEFMPKLRPFYFLFYLTLPSCATDSPPISDKSSSIFLPLAQQQQLVHWMMPPRFRCQDYLLPLLLALSPAAAAAREVEYHHCHCDGGGGGGGGGLWSMDSIFRWQKVSDLLIAAAYFSIPLEILYFVAGLRHLLPFRWVLVQFGAFIVLCGLTHLLTAFTYEPHPFMVVLLLTTAKFLTALVSFLTAITLLTLIPQLLRVKVRESLLWLKARELDREVVLMKRQEEASWHVRMLTHEIRKSLDRHTVLYTTLIELSRVLGLTNCAVWMPAAGEMCLTHELRRDGGGEDGVVGVDDADVVEVRGSDGVKLLGPDSVLAAASGGKEEGTGAVAAIRMPMLKVSDFKGGTPEVIQTSYAVLVLVPPAGKSWGRHEMEIVEVVAGQVAVALSHATLLEESRAMRDRLAEQNRELLQARRDALMANEARQAFQGVMSQGMRRPIHSILGLVSMVQEEALAPEQRLVVDTMARTATVVSTLVNDVMEMSADSRERFPLETRPFHLHAMIRDAACVARCLCDFRGFGFAVHVENALPDLVVGDERRIFHVLLHMVGNLIGRTEPGHVTLRVRAADDDVLDDRLGQRWDPWWPSYSTGYSSVKFVIGVKRQQNGDAGSPLSRRPSGKGIDLRLSFSMCRKLVQMMQGNIWAILDPQGLPESMTLVLRFQLQSPLTSSSLGGSFEQKHSSPSCQIAGLKVLLIDDDDDINLVVARKLLEKLGCVVSSPPSGSGFLSSVGSSAAAFQLVMVNLEMKRVKALDVATRISQYRSGRWPIVMAMASDQKAWEKCAQSGINGILKKPVILQELKDELARILQST.

Helical transmembrane passes span 137 to 157 (LIAA…AGLR), 166 to 186 (LVQF…TAFT), and 204 to 224 (LTAL…PQLL). Positions 176 and 180 each coordinate Cu cation. The GAF domain maps to 269 to 413 (DRHTVLYTTL…VVAGQVAVAL (145 aa)). Residues 416–452 (ATLLEESRAMRDRLAEQNRELLQARRDALMANEARQA) are a coiled coil. Residues 457–691 (MSQGMRRPIH…LVLRFQLQSP (235 aa)) form the Histidine kinase domain. One can recognise a Response regulatory domain in the interval 718 to 834 (LLIDDDDDIN…LKDELARILQ (117 aa)).

This sequence belongs to the ethylene receptor family. It depends on Cu cation as a cofactor.

It is found in the endoplasmic reticulum membrane. The enzyme catalyses ATP + protein L-histidine = ADP + protein N-phospho-L-histidine.. Functionally, ethylene receptor related to bacterial two-component regulators. Acts as a negative regulator of ethylene signaling. May delay the transition from the vegetative stage to the floral stage by up-regulating GI (GIGANTEA) and RCN1 and cause starch accumulation in stems by down-regulating the alpha-amylase AMY3D. This is Ethylene receptor 3 (ETR3) from Oryza sativa subsp. japonica (Rice).